A 145-amino-acid polypeptide reads, in one-letter code: Venom protein 30.1 (145 aa).

Residues 1 to 18 (MIIVKLFTCLLMVSSVLT) form the signal peptide.

In terms of processing, contains 5 disulfide bonds. Expressed by the venom gland.

The protein localises to the secreted. The sequence is that of Venom protein 30.1 from Lychas mucronatus (Chinese swimming scorpion).